A 430-amino-acid chain; its full sequence is Adenylosuccinate synthetase (430 aa).

GTP contacts are provided by residues 12–18 (GDEGKGK) and 40–42 (GHT). The Proton acceptor role is filled by D13. Residues D13 and G40 each contribute to the Mg(2+) site. IMP contacts are provided by residues 13–16 (DEGK), 38–41 (NAGH), T130, R144, Q224, T239, and R303. H41 functions as the Proton donor in the catalytic mechanism. Substrate is bound at residue 299–305 (ATTGRPR). GTP-binding positions include R305, 331 to 333 (KLD), and 413 to 415 (SVG).

The protein belongs to the adenylosuccinate synthetase family. In terms of assembly, homodimer. It depends on Mg(2+) as a cofactor.

Its subcellular location is the cytoplasm. It carries out the reaction IMP + L-aspartate + GTP = N(6)-(1,2-dicarboxyethyl)-AMP + GDP + phosphate + 2 H(+). Its pathway is purine metabolism; AMP biosynthesis via de novo pathway; AMP from IMP: step 1/2. Its function is as follows. Plays an important role in the de novo pathway of purine nucleotide biosynthesis. Catalyzes the first committed step in the biosynthesis of AMP from IMP. This is Adenylosuccinate synthetase from Trichlorobacter lovleyi (strain ATCC BAA-1151 / DSM 17278 / SZ) (Geobacter lovleyi).